Reading from the N-terminus, the 589-residue chain is Aspartate--tRNA ligase (589 aa).

E174 provides a ligand contact to L-aspartate. Residues 198-201 form an aspartate region; it reads QLFK. Residue R220 coordinates L-aspartate. Residues 220-222 and Q229 contribute to the ATP site; that span reads RDE. H448 contributes to the L-aspartate binding site. E484 contacts ATP. R491 contributes to the L-aspartate binding site. 536–539 lines the ATP pocket; that stretch reads GLDR.

The protein belongs to the class-II aminoacyl-tRNA synthetase family. Type 1 subfamily. Homodimer.

It is found in the cytoplasm. It catalyses the reaction tRNA(Asp) + L-aspartate + ATP = L-aspartyl-tRNA(Asp) + AMP + diphosphate. In terms of biological role, catalyzes the attachment of L-aspartate to tRNA(Asp) in a two-step reaction: L-aspartate is first activated by ATP to form Asp-AMP and then transferred to the acceptor end of tRNA(Asp). The sequence is that of Aspartate--tRNA ligase from Leuconostoc citreum (strain KM20).